Here is a 107-residue protein sequence, read N- to C-terminus: Age-related maculopathy susceptibility protein 2 (107 aa).

Residues 1-21 (MLRLYPGPMVTEAEGKGGPEM) are disordered.

As to expression, detected in retina and placenta.

Its subcellular location is the cytoplasm. The sequence is that of Age-related maculopathy susceptibility protein 2 (ARMS2) from Homo sapiens (Human).